The following is a 241-amino-acid chain: Large ribosomal subunit protein uL1 (241 aa).

This sequence belongs to the universal ribosomal protein uL1 family. In terms of assembly, part of the 50S ribosomal subunit.

Binds directly to 23S rRNA. The L1 stalk is quite mobile in the ribosome, and is involved in E site tRNA release. In terms of biological role, protein L1 is also a translational repressor protein, it controls the translation of the L11 operon by binding to its mRNA. The sequence is that of Large ribosomal subunit protein uL1 from Thermomicrobium roseum (strain ATCC 27502 / DSM 5159 / P-2).